A 353-amino-acid polypeptide reads, in one-letter code: S-adenosylmethionine:tRNA ribosyltransferase-isomerase (353 aa).

Belongs to the QueA family. In terms of assembly, monomer.

Its subcellular location is the cytoplasm. It catalyses the reaction 7-aminomethyl-7-carbaguanosine(34) in tRNA + S-adenosyl-L-methionine = epoxyqueuosine(34) in tRNA + adenine + L-methionine + 2 H(+). The protein operates within tRNA modification; tRNA-queuosine biosynthesis. Functionally, transfers and isomerizes the ribose moiety from AdoMet to the 7-aminomethyl group of 7-deazaguanine (preQ1-tRNA) to give epoxyqueuosine (oQ-tRNA). The polypeptide is S-adenosylmethionine:tRNA ribosyltransferase-isomerase (Baumannia cicadellinicola subsp. Homalodisca coagulata).